The chain runs to 373 residues: MSQNYYQILGVSKTASQADLKKAYLKLAKQYHPDTTDAKDAEKKFKEINAAYDVLKDEQKRAAYDRLGHDAFQNQQSRGGGGNHGGFHPDINDIFGDFFSDFMGGSRRSSRPTSAKVRGSDLKYNLTINLEEAFHGIEKNISFSSAVKCDTCHGSGSEKGETVTTCDACSGVGATRMQQGFFTIEQACHKCQGNGHIIKNPCKKCHGMGRYHKQRNLSVNIPAGVENGTRIRHTGEGEAGIRGGNSGDLYVDITIKPHDIYKVDGANLHCKLPISFVNAALGGEIEVPVIEGGKVNLTIPAGTQNGDQLRLRSKGMSKMRSTIRGDMLTHIHVEVPKNLSKRQRELLEEFKKESINEKENDGSFFNKMKSLWS.

Residues 4-68 form the J domain; that stretch reads NYYQILGVSK…QKRAAYDRLG (65 aa). The CR-type zinc-finger motif lies at 136-214; that stretch reads GIEKNISFSS…CHGMGRYHKQ (79 aa). Cysteine 149, cysteine 152, cysteine 166, cysteine 169, cysteine 188, cysteine 191, cysteine 202, and cysteine 205 together coordinate Zn(2+). 4 CXXCXGXG motif repeats span residues 149-156, 166-173, 188-195, and 202-209; these read CDTCHGSG, CDACSGVG, CHKCQGNG, and CKKCHGMG.

It belongs to the DnaJ family. Homodimer. Zn(2+) is required as a cofactor.

It localises to the cytoplasm. Its function is as follows. Participates actively in the response to hyperosmotic and heat shock by preventing the aggregation of stress-denatured proteins and by disaggregating proteins, also in an autonomous, DnaK-independent fashion. Unfolded proteins bind initially to DnaJ; upon interaction with the DnaJ-bound protein, DnaK hydrolyzes its bound ATP, resulting in the formation of a stable complex. GrpE releases ADP from DnaK; ATP binding to DnaK triggers the release of the substrate protein, thus completing the reaction cycle. Several rounds of ATP-dependent interactions between DnaJ, DnaK and GrpE are required for fully efficient folding. Also involved, together with DnaK and GrpE, in the DNA replication of plasmids through activation of initiation proteins. The polypeptide is Chaperone protein DnaJ (Rickettsia africae (strain ESF-5)).